A 201-amino-acid polypeptide reads, in one-letter code: Proteinase inhibitor type-2 CEVI57 (201 aa).

The first 23 residues, methionine 1–threonine 23, serve as a signal peptide directing secretion. Repeat copies occupy residues alanine 27–asparagine 83, proline 84–lysine 143, and glycine 144–serine 199. 8 disulfide bridges follow: cysteine 30–cysteine 118, cysteine 34–cysteine 114, cysteine 42–cysteine 124, cysteine 54–cysteine 91, cysteine 57–cysteine 75, cysteine 58–cysteine 87, cysteine 64–cysteine 100, and cysteine 117–cysteine 135.

This sequence belongs to the protease inhibitor I20 (potato type II proteinase inhibitor) family.

The polypeptide is Proteinase inhibitor type-2 CEVI57 (CEVI57) (Solanum lycopersicum (Tomato)).